Consider the following 258-residue polypeptide: 3-deoxy-manno-octulosonate cytidylyltransferase (258 aa).

It belongs to the KdsB family.

The protein resides in the cytoplasm. It catalyses the reaction 3-deoxy-alpha-D-manno-oct-2-ulosonate + CTP = CMP-3-deoxy-beta-D-manno-octulosonate + diphosphate. It participates in nucleotide-sugar biosynthesis; CMP-3-deoxy-D-manno-octulosonate biosynthesis; CMP-3-deoxy-D-manno-octulosonate from 3-deoxy-D-manno-octulosonate and CTP: step 1/1. Its pathway is bacterial outer membrane biogenesis; lipopolysaccharide biosynthesis. Its function is as follows. Activates KDO (a required 8-carbon sugar) for incorporation into bacterial lipopolysaccharide in Gram-negative bacteria. This is 3-deoxy-manno-octulosonate cytidylyltransferase from Nitrobacter hamburgensis (strain DSM 10229 / NCIMB 13809 / X14).